Reading from the N-terminus, the 107-residue chain is UPF0060 membrane protein M446_5886 (107 aa).

Helical transmembrane passes span 4-24 (LLAY…IWAW), 31-51 (PLWL…LTRV), 59-79 (AYAA…WAAE), and 85-105 (RWDL…LLGP).

It belongs to the UPF0060 family.

It is found in the cell inner membrane. This is UPF0060 membrane protein M446_5886 from Methylobacterium sp. (strain 4-46).